A 150-amino-acid polypeptide reads, in one-letter code: SPbeta prophage-derived uncharacterized protein YoqH (150 aa).

The signal sequence occupies residues 1–23; sequence MKRFILVLSFLSIIVAYPIQTNA.

The sequence is that of SPbeta prophage-derived uncharacterized protein YoqH (yoqH) from Bacillus subtilis (strain 168).